Consider the following 412-residue polypeptide: Chorismate synthase (412 aa).

NADP(+) contacts are provided by Arg-40 and Arg-46. Residues 134 to 136 (RAS), 255 to 256 (QA), Gly-299, 314 to 318 (KPIAT), and Arg-340 each bind FMN.

This sequence belongs to the chorismate synthase family. In terms of assembly, homotetramer. It depends on FMNH2 as a cofactor.

The catalysed reaction is 5-O-(1-carboxyvinyl)-3-phosphoshikimate = chorismate + phosphate. It functions in the pathway metabolic intermediate biosynthesis; chorismate biosynthesis; chorismate from D-erythrose 4-phosphate and phosphoenolpyruvate: step 7/7. Functionally, catalyzes the anti-1,4-elimination of the C-3 phosphate and the C-6 proR hydrogen from 5-enolpyruvylshikimate-3-phosphate (EPSP) to yield chorismate, which is the branch point compound that serves as the starting substrate for the three terminal pathways of aromatic amino acid biosynthesis. This reaction introduces a second double bond into the aromatic ring system. The polypeptide is Chorismate synthase (Clavibacter michiganensis subsp. michiganensis (strain NCPPB 382)).